The chain runs to 106 residues: Pyrimidine/purine nucleoside phosphorylase (106 aa).

It belongs to the nucleoside phosphorylase PpnP family.

The enzyme catalyses a purine D-ribonucleoside + phosphate = a purine nucleobase + alpha-D-ribose 1-phosphate. The catalysed reaction is adenosine + phosphate = alpha-D-ribose 1-phosphate + adenine. It carries out the reaction cytidine + phosphate = cytosine + alpha-D-ribose 1-phosphate. It catalyses the reaction guanosine + phosphate = alpha-D-ribose 1-phosphate + guanine. The enzyme catalyses inosine + phosphate = alpha-D-ribose 1-phosphate + hypoxanthine. The catalysed reaction is thymidine + phosphate = 2-deoxy-alpha-D-ribose 1-phosphate + thymine. It carries out the reaction uridine + phosphate = alpha-D-ribose 1-phosphate + uracil. It catalyses the reaction xanthosine + phosphate = alpha-D-ribose 1-phosphate + xanthine. Catalyzes the phosphorolysis of diverse nucleosides, yielding D-ribose 1-phosphate and the respective free bases. Can use uridine, adenosine, guanosine, cytidine, thymidine, inosine and xanthosine as substrates. Also catalyzes the reverse reactions. This is Pyrimidine/purine nucleoside phosphorylase from Paraburkholderia xenovorans (strain LB400).